The chain runs to 327 residues: Phenylalanine--tRNA ligase alpha subunit (327 aa).

Glutamate 252 is a Mg(2+) binding site.

The protein belongs to the class-II aminoacyl-tRNA synthetase family. Phe-tRNA synthetase alpha subunit type 1 subfamily. As to quaternary structure, tetramer of two alpha and two beta subunits. Mg(2+) is required as a cofactor.

Its subcellular location is the cytoplasm. It carries out the reaction tRNA(Phe) + L-phenylalanine + ATP = L-phenylalanyl-tRNA(Phe) + AMP + diphosphate + H(+). In Serratia proteamaculans (strain 568), this protein is Phenylalanine--tRNA ligase alpha subunit.